We begin with the raw amino-acid sequence, 172 residues long: MLDAFAKVVAQADARGEFLSNTQLDALSKMVSEGNKRLDVVNRITSNASAIVTNAARALFSEQPQLIQPGGNAYTNRRMAACLRDMEIILRYVSYAIIAGDSSILDDRCLNGLRETYQALGVPGASVAVGIEKMKDSAIAIANDPSGITTGDCSALMAEVGTYFDRAATAVQ.

Residues Asn-35, Asp-39, Asn-72, Arg-77, Cys-82, 82-88, 149-151, and Cys-153 each bind (2R,3E)-phycocyanobilin; these read CLRDMEI and TTG. Asn-72 carries the post-translational modification N4-methylasparagine.

This sequence belongs to the phycobiliprotein family. In terms of assembly, heterodimer of an alpha and a beta subunit. Dimers further assemble into trimers and the trimers into hexamers. The basic functional unit of phycobiliproteins is a ring-shaped hexamer formed from two back-to-back trimers contacting via the alpha chain subunits. The trimers are composed of alpha/beta subunit heterodimers arranged around a three-fold axis of symmetry. The phycoerythrins also contain a gamma subunit which is located in the center of the hexamer. Contains two covalently linked phycocyanobilin chromophores.

Its subcellular location is the plastid. It localises to the chloroplast thylakoid membrane. In terms of biological role, light-harvesting photosynthetic tetrapyrrole chromophore-protein from the phycobiliprotein complex (phycobilisome, PBS). Phycocyanin is the major phycobiliprotein in the PBS rod. This chain is C-phycocyanin beta chain (cpcB), found in Galdieria sulphuraria (Red alga).